Here is a 407-residue protein sequence, read N- to C-terminus: Phosphopentomutase (407 aa).

Mn(2+)-binding residues include Asp10, Asp306, His311, Asp347, His348, and His359.

The protein belongs to the phosphopentomutase family. Requires Mn(2+) as cofactor.

The protein resides in the cytoplasm. The enzyme catalyses 2-deoxy-alpha-D-ribose 1-phosphate = 2-deoxy-D-ribose 5-phosphate. The catalysed reaction is alpha-D-ribose 1-phosphate = D-ribose 5-phosphate. The protein operates within carbohydrate degradation; 2-deoxy-D-ribose 1-phosphate degradation; D-glyceraldehyde 3-phosphate and acetaldehyde from 2-deoxy-alpha-D-ribose 1-phosphate: step 1/2. Isomerase that catalyzes the conversion of deoxy-ribose 1-phosphate (dRib-1-P) and ribose 1-phosphate (Rib-1-P) to deoxy-ribose 5-phosphate (dRib-5-P) and ribose 5-phosphate (Rib-5-P), respectively. The protein is Phosphopentomutase of Yersinia pseudotuberculosis serotype O:1b (strain IP 31758).